The following is an 89-amino-acid chain: Exodeoxyribonuclease 7 small subunit (89 aa).

Residues 1-22 are disordered; the sequence is MRKKSSSNKEETALHPPPENFE.

Belongs to the XseB family. Heterooligomer composed of large and small subunits.

It localises to the cytoplasm. It carries out the reaction Exonucleolytic cleavage in either 5'- to 3'- or 3'- to 5'-direction to yield nucleoside 5'-phosphates.. Bidirectionally degrades single-stranded DNA into large acid-insoluble oligonucleotides, which are then degraded further into small acid-soluble oligonucleotides. The polypeptide is Exodeoxyribonuclease 7 small subunit (Nitrosomonas europaea (strain ATCC 19718 / CIP 103999 / KCTC 2705 / NBRC 14298)).